We begin with the raw amino-acid sequence, 96 residues long: Small ribosomal subunit protein bS6 (96 aa).

The protein belongs to the bacterial ribosomal protein bS6 family.

Functionally, binds together with bS18 to 16S ribosomal RNA. This is Small ribosomal subunit protein bS6 from Natranaerobius thermophilus (strain ATCC BAA-1301 / DSM 18059 / JW/NM-WN-LF).